A 501-amino-acid chain; its full sequence is Glutamyl-tRNA(Gln) amidotransferase subunit A (501 aa).

Catalysis depends on charge relay system residues Lys-84 and Ser-159. Ser-183 acts as the Acyl-ester intermediate in catalysis.

This sequence belongs to the amidase family. GatA subfamily. Heterotrimer of A, B and C subunits.

It carries out the reaction L-glutamyl-tRNA(Gln) + L-glutamine + ATP + H2O = L-glutaminyl-tRNA(Gln) + L-glutamate + ADP + phosphate + H(+). In terms of biological role, allows the formation of correctly charged Gln-tRNA(Gln) through the transamidation of misacylated Glu-tRNA(Gln) in organisms which lack glutaminyl-tRNA synthetase. The reaction takes place in the presence of glutamine and ATP through an activated gamma-phospho-Glu-tRNA(Gln). This Streptomyces avermitilis (strain ATCC 31267 / DSM 46492 / JCM 5070 / NBRC 14893 / NCIMB 12804 / NRRL 8165 / MA-4680) protein is Glutamyl-tRNA(Gln) amidotransferase subunit A.